The primary structure comprises 226 residues: MSSWPPRVVIRRSAGLRTMESALARTGLGPVAGVDEAGRGACAGPLVIAACVLAPKPQAALARLDDSKKLTERAREELFPAIKRLALAWSVVSVPAAEVDQIGIHVANIEGMRRAVAGLDLEPGYVLTDGFRVPGLTAPSLPVIGGDGAAACIAAASVLAKVTRDRVMTEMDETHPGYGFAIHKGYSTPLHMDALDELGPCPEHRMTYANVVAAGVRLEQRAGRTG.

The 192-residue stretch at 29–220 (GPVAGVDEAG…VVAAGVRLEQ (192 aa)) folds into the RNase H type-2 domain. 3 residues coordinate a divalent metal cation: Asp35, Glu36, and Asp129.

The protein belongs to the RNase HII family. It depends on Mn(2+) as a cofactor. Mg(2+) serves as cofactor.

The protein resides in the cytoplasm. It catalyses the reaction Endonucleolytic cleavage to 5'-phosphomonoester.. In terms of biological role, endonuclease that specifically degrades the RNA of RNA-DNA hybrids. The protein is Ribonuclease HII of Rhodococcus erythropolis (strain PR4 / NBRC 100887).